Reading from the N-terminus, the 318-residue chain is Cytosolic Fe-S cluster assembly factor Nubp1 homolog (318 aa).

The segment covering 1 to 15 (MSAPEVENKPADAPE) has biased composition (basic and acidic residues). A disordered region spans residues 1–29 (MSAPEVENKPADAPEHCPGTESENAGKAS). [4Fe-4S] cluster contacts are provided by cysteine 17, cysteine 31, cysteine 34, and cysteine 40. 70–77 (GKGGVGKS) contacts ATP. Cysteine 245 and cysteine 248 together coordinate [4Fe-4S] cluster.

Belongs to the Mrp/NBP35 ATP-binding proteins family. NUBP1/NBP35 subfamily. Heterotetramer of 2 Nubp1 and 2 Nubp2 chains. The cofactor is [4Fe-4S] cluster.

The protein localises to the cytoplasm. In terms of biological role, component of the cytosolic iron-sulfur (Fe/S) protein assembly (CIA) machinery. Required for maturation of extramitochondrial Fe-S proteins. The Nubp1-Nubp2 heterotetramer forms a Fe-S scaffold complex, mediating the de novo assembly of an Fe-S cluster and its transfer to target apoproteins. The polypeptide is Cytosolic Fe-S cluster assembly factor Nubp1 homolog (Aedes aegypti (Yellowfever mosquito)).